The following is a 371-amino-acid chain: Protein NDRG2 (371 aa).

The interval 1-21 is disordered; it reads MAELQEVQITEEKPLLPGQTP. An N-acetylalanine modification is found at alanine 2. A Phosphothreonine modification is found at threonine 20. A phosphoserine mark is found at serine 326 and serine 328. Threonine 330 is modified (phosphothreonine). Position 332 is a phosphoserine (serine 332). Threonine 334 is modified (phosphothreonine). The interval 334 to 371 is disordered; sequence TSAASVDGNRSRSRTLSQSSESGTLSSGPPGHTMEVSC. A phosphoserine mark is found at serine 335, serine 338, and serine 344. The span at 347–361 shows a compositional bias: low complexity; sequence RTLSQSSESGTLSSG. Residue threonine 348 is modified to Phosphothreonine. Residues serine 350, serine 352, serine 353, and serine 355 each carry the phosphoserine modification. Threonine 357 bears the Phosphothreonine mark. Serine 370 is modified (phosphoserine).

This sequence belongs to the NDRG family. Interacts with CTNNB1. In terms of tissue distribution, highly expressed in brain, heart, skeletal muscle and salivary gland, and moderately in kidney and liver. Expressed in dendritic cells, but not in other blood cells. Expression levels are low in pancreatic and liver cancer tissues; absent in meningioma. Expressed in low-grade gliomas but present at low levels in glioblastoma. Isoform 1 and isoform 2 are present in brain neurons and up-regulated in Alzheimer disease (at protein level).

Its subcellular location is the cytoplasm. It is found in the perinuclear region. It localises to the cell projection. The protein resides in the growth cone. Functionally, contributes to the regulation of the Wnt signaling pathway. Down-regulates CTNNB1-mediated transcriptional activation of target genes, such as CCND1, and may thereby act as tumor suppressor. May be involved in dendritic cell and neuron differentiation. The sequence is that of Protein NDRG2 (NDRG2) from Homo sapiens (Human).